A 514-amino-acid polypeptide reads, in one-letter code: Histidine ammonia-lyase (514 aa).

The segment at residues 143–145 (CSG) is a cross-link (5-imidazolinone (Cys-Gly)). Ser144 is subject to 2,3-didehydroalanine (Ser).

This sequence belongs to the PAL/histidase family. Contains an active site 4-methylidene-imidazol-5-one (MIO), which is formed autocatalytically by cyclization and dehydration of residues Cys-Ser-Gly.

The protein resides in the cytoplasm. The enzyme catalyses L-histidine = trans-urocanate + NH4(+). Its pathway is amino-acid degradation; L-histidine degradation into L-glutamate; N-formimidoyl-L-glutamate from L-histidine: step 1/3. The chain is Histidine ammonia-lyase (hutH) from Streptomyces griseus.